Here is a 479-residue protein sequence, read N- to C-terminus: Membrane-bound lytic murein transglycosylase F (479 aa).

Residues 1-18 (MKGLFIRIVLAICLSLWA) form the signal peptide. Positions 19–266 (IDMVFPWQQI…RIEEKYFNHL (248 aa)) are non-LT domain. Residues 267–479 (NQFDYVDTRS…ISTQTQQEQR (213 aa)) are LT domain. The active site involves Glu-311.

The protein in the N-terminal section; belongs to the bacterial solute-binding protein 3 family. This sequence in the C-terminal section; belongs to the transglycosylase Slt family.

The protein localises to the cell outer membrane. The catalysed reaction is Exolytic cleavage of the (1-&gt;4)-beta-glycosidic linkage between N-acetylmuramic acid (MurNAc) and N-acetylglucosamine (GlcNAc) residues in peptidoglycan, from either the reducing or the non-reducing ends of the peptidoglycan chains, with concomitant formation of a 1,6-anhydrobond in the MurNAc residue.. Functionally, murein-degrading enzyme that degrades murein glycan strands and insoluble, high-molecular weight murein sacculi, with the concomitant formation of a 1,6-anhydromuramoyl product. Lytic transglycosylases (LTs) play an integral role in the metabolism of the peptidoglycan (PG) sacculus. Their lytic action creates space within the PG sacculus to allow for its expansion as well as for the insertion of various structures such as secretion systems and flagella. This chain is Membrane-bound lytic murein transglycosylase F, found in Histophilus somni (strain 2336) (Haemophilus somnus).